Consider the following 444-residue polypeptide: Ribulose bisphosphate carboxylase large chain (444 aa).

At lysine 7 the chain carries N6,N6,N6-trimethyllysine. Substrate contacts are provided by asparagine 116 and threonine 166. The active-site Proton acceptor is the lysine 168. Lysine 170 lines the substrate pocket. Residues lysine 194, aspartate 196, and glutamate 197 each coordinate Mg(2+). Lysine 194 is subject to N6-carboxylysine. Histidine 287 acts as the Proton acceptor in catalysis. The substrate site is built by arginine 288, histidine 320, and serine 372.

The protein belongs to the RuBisCO large chain family. Type I subfamily. In terms of assembly, heterohexadecamer of 8 large chains and 8 small chains; disulfide-linked. The disulfide link is formed within the large subunit homodimers. It depends on Mg(2+) as a cofactor. The disulfide bond which can form in the large chain dimeric partners within the hexadecamer appears to be associated with oxidative stress and protein turnover.

The protein localises to the plastid. Its subcellular location is the chloroplast. The enzyme catalyses 2 (2R)-3-phosphoglycerate + 2 H(+) = D-ribulose 1,5-bisphosphate + CO2 + H2O. The catalysed reaction is D-ribulose 1,5-bisphosphate + O2 = 2-phosphoglycolate + (2R)-3-phosphoglycerate + 2 H(+). Its function is as follows. RuBisCO catalyzes two reactions: the carboxylation of D-ribulose 1,5-bisphosphate, the primary event in carbon dioxide fixation, as well as the oxidative fragmentation of the pentose substrate in the photorespiration process. Both reactions occur simultaneously and in competition at the same active site. This is Ribulose bisphosphate carboxylase large chain from Watsonia angusta.